A 281-amino-acid polypeptide reads, in one-letter code: MVRVYIGRLPNRASDRDVEHFFRGYGKLSDVIMKNGFGFVDFQDQRDADDAVHDLNGKELCGERVILEFPRRKVGYNEERSGSGFRGREPTFRKGGERQFSNRYSRPCSTRFRLVIDNLSTRYSWQDIKDHIRKLGIEPTYSEAHKRNVNQAIVCFTSHDDLRDAMNKLQGEDLNGRKLKCTDETRDRSRSRSPRRRSRSRSPTRSRSPPARRRSPGSDRSDRKSRSASPKKRSDKRARSESKSRSRSGGRRSRSNSPPNRSPSPKKRRDNSSPRSGSASP.

In terms of domain architecture, RRM 1 spans 2-72; sequence VRVYIGRLPN…ERVILEFPRR (71 aa). Composition is skewed to basic and acidic residues over residues 78 to 97 and 168 to 190; these read EERS…KGGE and KLQG…DRSR. Disordered stretches follow at residues 78 to 100 and 168 to 281; these read EERS…ERQF and KLQG…SASP. Residues 112 to 186 enclose the RRM 2 domain; the sequence is FRLVIDNLST…RKLKCTDETR (75 aa). The segment covering 191–215 has biased composition (basic residues); that stretch reads SRSPRRRSRSRSPTRSRSPPARRRS. The segment covering 216-225 has biased composition (basic and acidic residues); sequence PGSDRSDRKS. Residues 245–254 are compositionally biased toward basic residues; sequence RSRSGGRRSR.

Belongs to the splicing factor SR family. In terms of processing, extensively phosphorylated on serine residues in the RS domain.

The protein localises to the nucleus. Its function is as follows. Plays a functionally redundant role in spermatogenesis and growth rate control. Required for the development of somatic gonad structures and for progression from larval stage to adulthood. The chain is Probable splicing factor, arginine/serine-rich 2 (rsp-2) from Caenorhabditis elegans.